We begin with the raw amino-acid sequence, 596 residues long: Isocitrate dehydrogenase kinase/phosphatase (596 aa).

ATP is bound by residues Ala316–Met322 and Lys337. Asp372 is an active-site residue.

This sequence belongs to the AceK family.

Its subcellular location is the cytoplasm. The catalysed reaction is L-seryl-[isocitrate dehydrogenase] + ATP = O-phospho-L-seryl-[isocitrate dehydrogenase] + ADP + H(+). Bifunctional enzyme which can phosphorylate or dephosphorylate isocitrate dehydrogenase (IDH) on a specific serine residue. This is a regulatory mechanism which enables bacteria to bypass the Krebs cycle via the glyoxylate shunt in response to the source of carbon. When bacteria are grown on glucose, IDH is fully active and unphosphorylated, but when grown on acetate or ethanol, the activity of IDH declines drastically concomitant with its phosphorylation. The protein is Isocitrate dehydrogenase kinase/phosphatase of Cronobacter sakazakii (strain ATCC BAA-894) (Enterobacter sakazakii).